The following is a 575-amino-acid chain: Manganese transporter SMF1 (575 aa).

Over 1-70 the chain is Extracellular; the sequence is MVNVGPSHAA…TYVSKRQVMR (70 aa). Residue Ser-24 is modified to Phosphoserine. Residues Lys-33 and Lys-34 each participate in a glycyl lysine isopeptide (Lys-Gly) (interchain with G-Cter in ubiquitin) cross-link. A helical membrane pass occupies residues 71-91; the sequence is DIFAKYLKFIGPGLMVSVAYI. At 92 to 108 the chain is on the cytoplasmic side; sequence DPGNYSTAVDAGASNQF. The helical transmembrane segment at 109-129 threads the bilayer; sequence SLLCIILLSNFIAIFLQCLCI. Residues 130–156 lie on the Extracellular side of the membrane; it reads KLGSVTGLDLSRACREYLPRWLNWTLY. Residues 157 to 177 traverse the membrane as a helical segment; it reads FFAECAVIATDIAEVIGTAIA. Residues 178–179 are Cytoplasmic-facing; sequence LN. The chain crosses the membrane as a helical span at residues 180 to 200; sequence ILIKVPLPAGVAITVVDVFLI. The Extracellular segment spans residues 201–218; sequence MFTYKPGASSIRFIRIFE. The chain crosses the membrane as a helical span at residues 219–239; the sequence is CFVAVLVVGVCICFAIELAYI. Residues 240–266 lie on the Cytoplasmic side of the membrane; sequence PKSTSVKQVFRGFVPSAQMFDHNGIYT. A helical transmembrane segment spans residues 267-287; that stretch reads AISILGATVMPHSLFLGSALV. Residues 288 to 344 are Extracellular-facing; that stretch reads QPRLLDYDVKHGNYTVSEEQDKVKKSKSTEEIMEEKYFNYRPTNAAIKYCMKYSMVE. A helical transmembrane segment spans residues 345-365; that stretch reads LSITLFTLALFVNCAILVVAG. Topologically, residues 366–396 are cytoplasmic; the sequence is STLYNSPEADGADLFTIHELLSRNLAPAAGT. A helical transmembrane segment spans residues 397-417; sequence IFMLALLLSGQSAGVVCTMSG. At 418–463 the chain is on the extracellular side; the sequence is QIVSEGHINWKLQPWQRRLATRCISIIPCLVISICIGREALSKALN. A helical membrane pass occupies residues 464-484; that stretch reads ASQVVLSIVLPFLVAPLIFFT. The Cytoplasmic portion of the chain corresponds to 485–543; sequence CKKSIMKTEITVDHTEEDSHNHQNNNDRSAGSVIEQDGSSGMEIENGKDVKIVYMANNW. The tract at residues 498–517 is disordered; the sequence is HTEEDSHNHQNNNDRSAGSV. The chain crosses the membrane as a helical span at residues 544-564; the sequence is IITVIAIIVWLFLSLLNVYAI. The Extracellular portion of the chain corresponds to 565 to 575; the sequence is VQLGMSHGDIS.

It belongs to the NRAMP family.

It is found in the cell membrane. The catalysed reaction is Mn(2+)(in) = Mn(2+)(out). Functionally, high-affinity manganese transporter involved in manganese uptake from the extracellular environment. Also contributes to cellular accumulation of other divalent metal ions such as cadmium, cobalt, copper, iron and nickel. This chain is Manganese transporter SMF1 (SMF1), found in Saccharomyces cerevisiae (strain ATCC 204508 / S288c) (Baker's yeast).